The primary structure comprises 305 residues: tRNA dimethylallyltransferase (305 aa).

8–15 contacts ATP; the sequence is GPTGTGKS. 10–15 serves as a coordination point for substrate; the sequence is TGTGKS.

Belongs to the IPP transferase family. Monomer. The cofactor is Mg(2+).

The enzyme catalyses adenosine(37) in tRNA + dimethylallyl diphosphate = N(6)-dimethylallyladenosine(37) in tRNA + diphosphate. Its function is as follows. Catalyzes the transfer of a dimethylallyl group onto the adenine at position 37 in tRNAs that read codons beginning with uridine, leading to the formation of N6-(dimethylallyl)adenosine (i(6)A). This chain is tRNA dimethylallyltransferase, found in Mycobacterium sp. (strain KMS).